We begin with the raw amino-acid sequence, 1208 residues long: Urease accessory protein 2 (1208 aa).

2 coiled-coil regions span residues 187 to 362 and 400 to 469; these read RDKI…EKAA and IKAL…MHEQ. The region spanning 523–633 is the SMC hinge domain; that stretch reads DGVFGPLYDL…ICEDLQTAAH (111 aa). Coiled coils occupy residues 688–771 and 817–903; these read HIEV…YEEE and NRLE…VQTQ. The disordered stretch occupies residues 748–773; the sequence is ESSLEEAEGASRDAKAKRASYEEELR. A compositionally biased stretch (basic and acidic residues) spans 756–773; the sequence is GASRDAKAKRASYEEELR.

It belongs to the SMC family. SMC3 subfamily. Component of cohesin complexes.

The protein resides in the nucleus. Its function is as follows. Central component of cohesin, a complex required for chromosome cohesion during the cell cycle. The cohesin complex may form a large proteinaceous ring within which sister chromatids can be trapped. At anaphase, the complex is cleaved and dissociates from chromatin, allowing sister chromatids to segregate. Cohesion is coupled to DNA replication and is involved in DNA repair. The cohesin complex also plays an important role in spindle pole assembly during mitosis and in chromosomes movement. Is unrelated to urease function in C.neoformans. This Cryptococcus neoformans var. grubii serotype A (strain H99 / ATCC 208821 / CBS 10515 / FGSC 9487) (Filobasidiella neoformans var. grubii) protein is Urease accessory protein 2.